The following is a 315-amino-acid chain: GTP cyclohydrolase MptA (315 aa).

This sequence belongs to the GTP cyclohydrolase IV family. Homodimer. Requires Fe(2+) as cofactor.

It carries out the reaction GTP + H2O = 7,8-dihydroneopterin 2',3'-cyclic phosphate + formate + diphosphate + H(+). The protein operates within cofactor biosynthesis; 5,6,7,8-tetrahydromethanopterin biosynthesis. Functionally, converts GTP to 7,8-dihydro-D-neopterin 2',3'-cyclic phosphate, the first intermediate in the biosynthesis of coenzyme methanopterin. This Methanococcus maripaludis (strain DSM 14266 / JCM 13030 / NBRC 101832 / S2 / LL) protein is GTP cyclohydrolase MptA.